We begin with the raw amino-acid sequence, 533 residues long: Calcitonin receptor (533 aa).

The N-terminal stretch at 1-41 (MTPRRSRVKRRNLRKPKMRFLLVNRFTLLLLLLVSPTPVLQ) is a signal peptide. Topologically, residues 42-163 (APTNLTDSGL…FTSEKLQNAY (122 aa)) are extracellular. N-linked (GlcNAc...) asparagine glycans are attached at residues Asn-45, Asn-90, Asn-142, and Asn-147. Disulfide bonds link Cys-72/Cys-98, Cys-89/Cys-129, and Cys-112/Cys-151. Residues 164–186 (VLYYLALVGHSLSIAALVASMLI) traverse the membrane as a helical segment. The Cytoplasmic segment spans residues 187 to 198 (FWIFKNLSCQRV). A helical membrane pass occupies residues 199–219 (TLHKHMFLTYILNSIIIIIHL). The Extracellular portion of the chain corresponds to 220–273 (VEVVPNGDLVRRDPMHIFHHNTHMWTMQWELSPPLPLSAHEGKMDPHASEVISC). An intrachain disulfide couples Cys-273 to Cys-343. A helical transmembrane segment spans residues 274-296 (KVLHFLHQYMMSCNYFWMLCEGI). Over 297–313 (YLHTLIVMAVFTDEQRL) the chain is Cytoplasmic. Residues 314 to 334 (RWYYLLGWGFPIVPTIIHAIT) form a helical membrane-spanning segment. Residues 335 to 350 (RALYYNDNCWLSAETH) are Extracellular-facing. The chain crosses the membrane as a helical span at residues 351–374 (LLYIIHGPVMVALVVNFFFLLNIV). At 375–394 (RVLVTKMRQTHEAESYMYLK) the chain is on the cytoplasmic side. The helical transmembrane segment at 395–413 (AVKATMVLVPLLGIQFVVF) threads the bilayer. Residues 414–421 (PWRPSNKV) lie on the Extracellular side of the membrane. The chain crosses the membrane as a helical span at residues 422-448 (LGKIYDYLMHSLIHFQGFFVATIYCFC). At 449–533 (NHEVQVTLKR…MNVIQQDASA (85 aa)) the chain is on the cytoplasmic side.

This sequence belongs to the G-protein coupled receptor 2 family. In terms of assembly, heterodimer of CALCR and RAMP1, RAMP2 or RAMP3; the receptor complexes function as AMYR1, AMYR2 and AMYR3 receptors, respectively, and respond to amylin/IAPP, calcitonin/CT and CGRP1 ligands. Interacts with GPRASP2.

The protein resides in the cell membrane. G protein-coupled receptor activated by ligand peptides amylin (IAPP), calcitonin (CT/CALCA) and calcitonin gene-related peptide type 1 (CGRP1/CALCA). CALCR interacts with receptor-activity-modifying proteins RAMP1, 2 and 3 to form receptor complexes AMYR1, 2 and 3, respectively. IAPP, CT and CGRP1 activate CALCR and AMYRs with distinct modes of receptor activation resulting in specific phenotypes. Ligand binding causes a conformation change that triggers signaling via guanine nucleotide-binding proteins (G proteins) and modulates the activity of downstream effectors. Activates cAMP-dependent pathway. This is Calcitonin receptor from Mus musculus (Mouse).